Here is a 418-residue protein sequence, read N- to C-terminus: D-amino acid dehydrogenase (418 aa).

V3 to W17 contacts FAD.

It belongs to the DadA oxidoreductase family. FAD is required as a cofactor.

The catalysed reaction is a D-alpha-amino acid + A + H2O = a 2-oxocarboxylate + AH2 + NH4(+). Its function is as follows. Oxidative deamination of D-amino acids. In Neisseria meningitidis serogroup A / serotype 4A (strain DSM 15465 / Z2491), this protein is D-amino acid dehydrogenase.